A 291-amino-acid chain; its full sequence is Diaminopimelate epimerase (291 aa).

Substrate contacts are provided by N13, Q46, and N66. Catalysis depends on C75, which acts as the Proton donor. Substrate contacts are provided by residues 76-77, N170, N203, and 221-222; these read GN and ER. Catalysis depends on C230, which acts as the Proton acceptor. Residue 231–232 coordinates substrate; it reads GS.

This sequence belongs to the diaminopimelate epimerase family. As to quaternary structure, homodimer.

The protein resides in the cytoplasm. It catalyses the reaction (2S,6S)-2,6-diaminopimelate = meso-2,6-diaminopimelate. The protein operates within amino-acid biosynthesis; L-lysine biosynthesis via DAP pathway; DL-2,6-diaminopimelate from LL-2,6-diaminopimelate: step 1/1. In terms of biological role, catalyzes the stereoinversion of LL-2,6-diaminopimelate (L,L-DAP) to meso-diaminopimelate (meso-DAP), a precursor of L-lysine and an essential component of the bacterial peptidoglycan. The chain is Diaminopimelate epimerase from Albidiferax ferrireducens (strain ATCC BAA-621 / DSM 15236 / T118) (Rhodoferax ferrireducens).